Reading from the N-terminus, the 513-residue chain is ATP synthase subunit alpha (513 aa).

169–176 (GDRQIGKT) lines the ATP pocket.

The protein belongs to the ATPase alpha/beta chains family. As to quaternary structure, F-type ATPases have 2 components, CF(1) - the catalytic core - and CF(0) - the membrane proton channel. CF(1) has five subunits: alpha(3), beta(3), gamma(1), delta(1), epsilon(1). CF(0) has three main subunits: a(1), b(2) and c(9-12). The alpha and beta chains form an alternating ring which encloses part of the gamma chain. CF(1) is attached to CF(0) by a central stalk formed by the gamma and epsilon chains, while a peripheral stalk is formed by the delta and b chains.

Its subcellular location is the cell inner membrane. It catalyses the reaction ATP + H2O + 4 H(+)(in) = ADP + phosphate + 5 H(+)(out). Its function is as follows. Produces ATP from ADP in the presence of a proton gradient across the membrane. The alpha chain is a regulatory subunit. This Shewanella halifaxensis (strain HAW-EB4) protein is ATP synthase subunit alpha.